The chain runs to 299 residues: Pyridoxal 5'-phosphate synthase subunit PdxS (299 aa).

Asp24 contacts D-ribose 5-phosphate. Lys81 functions as the Schiff-base intermediate with D-ribose 5-phosphate in the catalytic mechanism. Residue Gly153 coordinates D-ribose 5-phosphate. A D-glyceraldehyde 3-phosphate-binding site is contributed by Arg165. Residues Gly219 and 240-241 each bind D-ribose 5-phosphate; that span reads GS.

The protein belongs to the PdxS/SNZ family. In the presence of PdxT, forms a dodecamer of heterodimers.

It carries out the reaction aldehydo-D-ribose 5-phosphate + D-glyceraldehyde 3-phosphate + L-glutamine = pyridoxal 5'-phosphate + L-glutamate + phosphate + 3 H2O + H(+). It participates in cofactor biosynthesis; pyridoxal 5'-phosphate biosynthesis. Its function is as follows. Catalyzes the formation of pyridoxal 5'-phosphate from ribose 5-phosphate (RBP), glyceraldehyde 3-phosphate (G3P) and ammonia. The ammonia is provided by the PdxT subunit. Can also use ribulose 5-phosphate and dihydroxyacetone phosphate as substrates, resulting from enzyme-catalyzed isomerization of RBP and G3P, respectively. This is Pyridoxal 5'-phosphate synthase subunit PdxS from Methanococcus maripaludis (strain C6 / ATCC BAA-1332).